A 142-amino-acid polypeptide reads, in one-letter code: Hemoglobin subunit alpha (142 aa).

Ser1 carries the N-acetylserine modification. Residues 1 to 142 enclose the Globin domain; the sequence is SLSDKDKAVV…LALALSEKYR (142 aa). His59 serves as a coordination point for O2. His88 is a binding site for heme b.

This sequence belongs to the globin family. As to quaternary structure, heterotetramer of two alpha chains and two beta chains. Red blood cells.

Its function is as follows. Involved in oxygen transport from gills to the various peripheral tissues. The chain is Hemoglobin subunit alpha (hba) from Carassius auratus (Goldfish).